The primary structure comprises 201 residues: Recombination protein RecR (201 aa).

The segment at 60–75 (CSVCGNVDSCDPCTIC) adopts a C4-type zinc-finger fold. The region spanning 83–178 (STLIVVETVG…RTTRLAHGVP (96 aa)) is the Toprim domain.

This sequence belongs to the RecR family.

Functionally, may play a role in DNA repair. It seems to be involved in an RecBC-independent recombinational process of DNA repair. It may act with RecF and RecO. The polypeptide is Recombination protein RecR (Methylocella silvestris (strain DSM 15510 / CIP 108128 / LMG 27833 / NCIMB 13906 / BL2)).